A 368-amino-acid chain; its full sequence is MALLSDLINLDLSGRTGKIIAEYIWVGGSGMDVRSKARTLSGPVDDPSKLPKWNFDGSSTGQAPGDDSEVILCPRAIFRDPFRKGQNILVMCDCYEPNGEPIPSNKRHGAAKIFSHPDVKAEEPWFGIEQEYTLLQKDTKWPLGWPLAYPGPQGPYYCAAGADKSYGRDIVDCAYKACLYAGIDISGINGEVMPGQWEFQVAPAVGVSAGDQLWVARYILERITEIAGVVVSFDPKPIPGDWNGAGAHTNYSTKSMRSDGGYEVIKKAIGKLGLRHREHIAAYGDGNERPLTGRHETADINTFVWGVPNRGASVRVGRDTEKEGKGYFEDRRPASNMDPYVVTCLIAETTMLWEPSHSNGDGKGAAAP.

A GS beta-grasp domain is found at 19–99; that stretch reads IIAEYIWVGG…VMCDCYEPNG (81 aa). The interval 38 to 66 is disordered; the sequence is RTLSGPVDDPSKLPKWNFDGSSTGQAPGD. Residues 106 to 368 enclose the GS catalytic domain; sequence KRHGAAKIFS…NGDGKGAAAP (263 aa).

The protein belongs to the glutamine synthetase family. In terms of assembly, homooctamer. As to expression, found mainly in the vascular tissues of seedling roots.

It localises to the cytoplasm. It carries out the reaction L-glutamate + NH4(+) + ATP = L-glutamine + ADP + phosphate + H(+). Functionally, plays a role in the flow of nitrogen into nitrogenous organic compounds. The sequence is that of Glutamine synthetase root isozyme 2 (GLN2) from Zea mays (Maize).